We begin with the raw amino-acid sequence, 296 residues long: Elongation factor Ts (296 aa).

Positions T81 to V84 are involved in Mg(2+) ion dislocation from EF-Tu.

It belongs to the EF-Ts family.

Its subcellular location is the cytoplasm. Associates with the EF-Tu.GDP complex and induces the exchange of GDP to GTP. It remains bound to the aminoacyl-tRNA.EF-Tu.GTP complex up to the GTP hydrolysis stage on the ribosome. The polypeptide is Elongation factor Ts (Ruthia magnifica subsp. Calyptogena magnifica).